A 328-amino-acid polypeptide reads, in one-letter code: Nickel import system permease protein NikB (328 aa).

6 helical membrane passes run leucine 11 to leucine 31, leucine 104 to isoleucine 124, valine 139 to isoleucine 159, isoleucine 170 to isoleucine 190, isoleucine 229 to valine 249, and valine 279 to leucine 299. Residues alanine 100–threonine 297 enclose the ABC transmembrane type-1 domain.

Belongs to the binding-protein-dependent transport system permease family. OppBC subfamily. The complex is composed of two ATP-binding proteins (NikD and NikE), two transmembrane proteins (NikB and NikC) and a solute-binding protein (NikA).

The protein localises to the cell membrane. In terms of biological role, part of the ABC transporter complex NikABCDE (Opp2) involved in nickel import. Probably responsible for the translocation of the substrate across the membrane. This chain is Nickel import system permease protein NikB, found in Staphylococcus aureus (strain bovine RF122 / ET3-1).